We begin with the raw amino-acid sequence, 151 residues long: Homeobox protein HD-1 (151 aa).

The homeobox DNA-binding region spans 87–146 (ESIKSRRFPKFITEALERSFEIDQYPSEAEKARLAKICKLSTKQINNWFTNKRNRTKGHE).

Its subcellular location is the nucleus. In Encephalitozoon cuniculi (strain GB-M1) (Microsporidian parasite), this protein is Homeobox protein HD-1 (HD-1).